The following is a 255-amino-acid chain: F-box only protein 44 (255 aa).

One can recognise an F-box domain in the interval 3–50 (VGNINELPENILLELFIHIPARQLLLRCRPVCSLWRDLIDLVTLWKRK). In terms of domain architecture, FBA spans 71 to 252 (FYFLRSLQRN…VTNSSITIGP (182 aa)).

In terms of assembly, part of a SCF (SKP1-cullin-F-box) protein ligase complex. Interacts with SKP1 and CUL1. As to expression, expressed in brain, liver, pancreas and adipose tissue (at protein level). Widely expressed.

Substrate-recognition component of the SCF (SKP1-CUL1-F-box protein)-type E3 ubiquitin ligase complex. The polypeptide is F-box only protein 44 (Fbxo44) (Mus musculus (Mouse)).